We begin with the raw amino-acid sequence, 333 residues long: Fructose-1,6-bisphosphatase class 1 (333 aa).

Residues E89, D110, L112, and D113 each contribute to the Mg(2+) site. Residues 113 to 116, N206, Y239, 257 to 259, and K269 contribute to the substrate site; these read DGSS and YLY. E275 provides a ligand contact to Mg(2+).

This sequence belongs to the FBPase class 1 family. In terms of assembly, homotetramer. Mg(2+) is required as a cofactor.

The protein localises to the cytoplasm. The enzyme catalyses beta-D-fructose 1,6-bisphosphate + H2O = beta-D-fructose 6-phosphate + phosphate. The protein operates within carbohydrate biosynthesis; gluconeogenesis. This chain is Fructose-1,6-bisphosphatase class 1, found in Sodalis glossinidius (strain morsitans).